We begin with the raw amino-acid sequence, 106 residues long: Small ribosomal subunit protein bS20 (106 aa).

A disordered region spans residues 1–32 (MAQKKPKRNLSALKRHRQSLKRRLRNKAKKSA).

In terms of assembly, part of the 30S ribosomal subunit.

Its function is as follows. One of the primary rRNA binding proteins, it binds directly to 16S rRNA where it nucleates assembly of the bottom of the body of the 30S subunit, by binding to several RNA helices of the 16S rRNA. This chain is Small ribosomal subunit protein bS20 (rpsT), found in Thermus thermophilus (strain ATCC 27634 / DSM 579 / HB8).